The sequence spans 684 residues: Extracellular lipase (684 aa).

Residues 1–48 form the signal peptide; that stretch reads MKKKLIYAAVVSALLAGCGGSDDNKGDTSSYLDYLLTGSNAVGPSALA. Disordered stretches follow at residues 321-405 and 462-493; these read SIPV…ADWG and QRER…GDRS. Basic and acidic residues predominate over residues 385 to 405; the sequence is ADCRSDPPERAAGRGEQADWG. The active-site Nucleophile is Ser568.

This sequence belongs to the AB hydrolase superfamily. Lipase family. In terms of assembly, monomer.

The protein resides in the secreted. The catalysed reaction is a triacylglycerol + H2O = a diacylglycerol + a fatty acid + H(+). Functionally, the optimum chain lengths for the acyl moiety is C6 for ester hydrolysis and C6 and C8 for triacylglycerol hydrolysis. The chain is Extracellular lipase from Aeromonas hydrophila.